The sequence spans 2388 residues: Hybrid signal transduction histidine kinase M (2388 aa).

8 disordered regions span residues 1 to 32 (MSNYLNANSTENNNNNNNNNNNNNNNINNNFN), 42 to 61 (FNTPPIGSNNNNNNNNNSIS), 69 to 111 (NECN…STPI), 123 to 209 (NRSN…NAYP), 237 to 337 (TLLN…SPKL), 361 to 421 (SPHG…YNDN), 430 to 449 (TRNTGYSSTGSIGNSSSSSF), and 486 to 542 (IYTP…NNNE). A compositionally biased stretch (polar residues) spans 69 to 82 (NECNSGGEQSPKIK). Composition is skewed to low complexity over residues 83 to 110 (TNNNSYNTPVSSSTSTTGTNTTPMKSTP), 125 to 206 (SNLN…SNSN), and 242 to 288 (SSNN…NNGG). Over residues 293-306 (QFISSDNKYNTVGN) the composition is skewed to polar residues. The segment covering 309–322 (HHHHHHQLHNHRHS) has biased composition (basic residues). Low complexity-rich tracts occupy residues 325-337 (QGSSSPIKSSPKL), 361-399 (SPHGSPFSSSSSSRKSSSSPSFLNQNNQNNPNNQNNQNN), 410-419 (NNSNDSFDYN), and 432-449 (NTGYSSTGSIGNSSSSSF). The segment covering 489–505 (PPYPQPYPQPPQLPPPS) has biased composition (pro residues). Over residues 506–541 (SSSSLSKENDNVDNNNTNNNNNNNNNNNNNNNNNNN) the composition is skewed to low complexity. 4 helical membrane-spanning segments follow: residues 550–570 (TMNLIHISLLSVLAFYIFLMV), 589–609 (FILIFSFHFIFSSILMFLLVV), 645–665 (YIFLGLVLSGLVNILQVNLFF), and 679–699 (NISTAIEFLVVGIVLNFSHIP). A disordered region spans residues 732–888 (NNDNKNKIND…NNNEEDDEEE (157 aa)). Residues 735–744 (NKNKINDKSD) show a composition bias toward basic and acidic residues. A compositionally biased stretch (low complexity) spans 745–880 (NSNSITNNNN…NNNNNNNNNN (136 aa)). Transmembrane regions (helical) follow at residues 896–916 (FQIFFTRIFLCLSITYTLIVL), 953–973 (VQFQAPLATLLHFIQLVLLLV), and 1025–1045 (CSVGFPIVGIILDIYSGWMSI). The Histidine kinase domain maps to 1093–1499 (RLVQNTGSII…VFELQVPMKC (407 aa)). The segment covering 1236–1257 (PIHHHRHHHRHHHHHHHHHHHH) has biased composition (basic residues). The interval 1236-1410 (PIHHHRHHHR…INNNINNNNN (175 aa)) is disordered. Over residues 1260-1274 (DDDDYDDDNDDDNNT) the composition is skewed to acidic residues. Over residues 1286–1315 (LSDKIKDNQDENLELKKSNNDKIIENKENQ) the composition is skewed to basic and acidic residues. A compositionally biased stretch (low complexity) spans 1316–1410 (ENNNNNNNNN…INNNINNNNN (95 aa)). The Response regulatory 1 domain maps to 1541–1656 (KILVIDDNPN…QLTVLSQLLP (116 aa)). D1592 bears the 4-aspartylphosphate mark. 5 disordered regions span residues 1666–1702 (SNQNLNNSGSSNGGGGGGGGGGGGGGGGGSGSSNIDF), 1960–2022 (GNNS…NSSN), 2036–2121 (CKGD…DIIN), 2133–2183 (QQQL…VKSS), and 2218–2256 (NQLNNNINNLNLNSNNNNNNNNNNNNNNNTNNDNNNNND). The span at 1676–1696 (SNGGGGGGGGGGGGGGGGGSG) shows a compositional bias: gly residues. The span at 1974 to 1985 (TNNNTTTTTTTT) shows a compositional bias: low complexity. Residues 1986–2010 (QPKKSPILTSSNGSDKSEGSTGSNR) show a composition bias toward polar residues. A compositionally biased stretch (low complexity) spans 2054–2064 (DSSSSSSSSDS). Over residues 2065 to 2076 (HGQDDHSYRLED) the composition is skewed to basic and acidic residues. 2 stretches are compositionally biased toward low complexity: residues 2078-2109 (SISSPSSQSPLLDLSGTSGTSGTTNLANSGIN) and 2133-2165 (QQQLQQQQQPQQQQPPGTPTISPSSSFPLLPIP). Over residues 2169 to 2183 (INSSGASSGIKVKSS) the composition is skewed to polar residues. The Response regulatory 2 domain occupies 2262 to 2383 (NILLVEDNLV…LLISLLKKLV (122 aa)). D2313 carries the post-translational modification 4-aspartylphosphate.

Activation probably requires transfer of a phosphate group between a histidine in the kinase core (transmitter) domain and an aspartate of the receiver domain.

The protein resides in the membrane. The catalysed reaction is ATP + protein L-histidine = ADP + protein N-phospho-L-histidine.. Its function is as follows. Acts as a receptor histidine kinase for a signal transduction pathway. This protein undergoes an ATP-dependent autophosphorylation at a conserved histidine residue in the kinase core, and a phosphoryl group is then transferred to a conserved aspartate residue in the receiver domain. This Dictyostelium discoideum (Social amoeba) protein is Hybrid signal transduction histidine kinase M (dhkM).